Here is a 283-residue protein sequence, read N- to C-terminus: Pantothenate synthetase (283 aa).

26 to 33 (MGNLHDGH) contacts ATP. His-33 functions as the Proton donor in the catalytic mechanism. Gln-57 serves as a coordination point for (R)-pantoate. A beta-alanine-binding site is contributed by Gln-57. Residue 148 to 151 (GKKD) coordinates ATP. A (R)-pantoate-binding site is contributed by Gln-154. ATP contacts are provided by residues Ala-177 and 185-188 (LSSR).

This sequence belongs to the pantothenate synthetase family. Homodimer.

It localises to the cytoplasm. It carries out the reaction (R)-pantoate + beta-alanine + ATP = (R)-pantothenate + AMP + diphosphate + H(+). It participates in cofactor biosynthesis; (R)-pantothenate biosynthesis; (R)-pantothenate from (R)-pantoate and beta-alanine: step 1/1. In terms of biological role, catalyzes the condensation of pantoate with beta-alanine in an ATP-dependent reaction via a pantoyl-adenylate intermediate. In Delftia acidovorans (strain DSM 14801 / SPH-1), this protein is Pantothenate synthetase.